Reading from the N-terminus, the 97-residue chain is Citrate lyase acyl carrier protein (97 aa).

At serine 14 the chain carries O-(phosphoribosyl dephospho-coenzyme A)serine.

This sequence belongs to the CitD family. Oligomer with a subunit composition of (alpha,beta,gamma)6.

It is found in the cytoplasm. Its function is as follows. Covalent carrier of the coenzyme of citrate lyase. This chain is Citrate lyase acyl carrier protein, found in Cronobacter sakazakii (strain ATCC BAA-894) (Enterobacter sakazakii).